The following is a 325-amino-acid chain: tRNA(Ile)-lysidine synthase (325 aa).

34–39 serves as a coordination point for ATP; the sequence is SGGADS.

The protein belongs to the tRNA(Ile)-lysidine synthase family.

It localises to the cytoplasm. The enzyme catalyses cytidine(34) in tRNA(Ile2) + L-lysine + ATP = lysidine(34) in tRNA(Ile2) + AMP + diphosphate + H(+). Ligates lysine onto the cytidine present at position 34 of the AUA codon-specific tRNA(Ile) that contains the anticodon CAU, in an ATP-dependent manner. Cytidine is converted to lysidine, thus changing the amino acid specificity of the tRNA from methionine to isoleucine. The polypeptide is tRNA(Ile)-lysidine synthase (Rhodococcus opacus (strain B4)).